Reading from the N-terminus, the 543-residue chain is Mitochondrial distribution and morphology protein 34 (543 aa).

Residues 1-202 (MSFNVNWNSL…LPTLLHKVSL (202 aa)) form the SMP-LTD domain. The segment at 519 to 543 (AFSHNDPSITPFELPPPPYHQLSRA) is disordered.

The protein belongs to the MDM34 family. Component of the ER-mitochondria encounter structure (ERMES) or MDM complex, composed of MMM1, MDM10, MDM12 and MDM34.

Its subcellular location is the mitochondrion outer membrane. Functionally, component of the ERMES/MDM complex, which serves as a molecular tether to connect the endoplasmic reticulum (ER) and mitochondria. Components of this complex are involved in the control of mitochondrial shape and protein biogenesis, and function in nonvesicular lipid trafficking between the ER and mitochondria. MDM34 is required for the interaction of the ER-resident membrane protein MMM1 and the outer mitochondrial membrane-resident beta-barrel protein MDM10. The protein is Mitochondrial distribution and morphology protein 34 of Clavispora lusitaniae (strain ATCC 42720) (Yeast).